The primary structure comprises 453 residues: Phosphoglucosamine mutase (453 aa).

The Phosphoserine intermediate role is filled by Ser102. Mg(2+)-binding residues include Ser102, Asp243, Asp245, and Asp247. At Ser102 the chain carries Phosphoserine.

It belongs to the phosphohexose mutase family. Requires Mg(2+) as cofactor. In terms of processing, activated by phosphorylation.

It catalyses the reaction alpha-D-glucosamine 1-phosphate = D-glucosamine 6-phosphate. Its function is as follows. Catalyzes the conversion of glucosamine-6-phosphate to glucosamine-1-phosphate. The chain is Phosphoglucosamine mutase from Bartonella tribocorum (strain CIP 105476 / IBS 506).